A 299-amino-acid chain; its full sequence is NAD kinase (299 aa).

The active-site Proton acceptor is the Asp75. NAD(+) is bound by residues 75 to 76 (DG), 149 to 150 (ND), Arg177, Asp179, 190 to 195 (TAYALS), Ala214, and Gln248.

The protein belongs to the NAD kinase family. Requires a divalent metal cation as cofactor.

Its subcellular location is the cytoplasm. The enzyme catalyses NAD(+) + ATP = ADP + NADP(+) + H(+). Involved in the regulation of the intracellular balance of NAD and NADP, and is a key enzyme in the biosynthesis of NADP. Catalyzes specifically the phosphorylation on 2'-hydroxyl of the adenosine moiety of NAD to yield NADP. The polypeptide is NAD kinase (Burkholderia thailandensis (strain ATCC 700388 / DSM 13276 / CCUG 48851 / CIP 106301 / E264)).